Reading from the N-terminus, the 98-residue chain is Integration host factor subunit beta (98 aa).

Belongs to the bacterial histone-like protein family. In terms of assembly, heterodimer of an alpha and a beta chain.

In terms of biological role, this protein is one of the two subunits of integration host factor, a specific DNA-binding protein that functions in genetic recombination as well as in transcriptional and translational control. The sequence is that of Integration host factor subunit beta from Pseudomonas putida (strain W619).